A 390-amino-acid polypeptide reads, in one-letter code: Ankyrin repeat domain-containing protein 63 (390 aa).

ANK repeat units follow at residues 11-40 (AGTRTFLEAMQAGKVHLARFVLDALDRSII), 46-79 (QGRTPLMVAVGLPDPAMRSRFVRLLLEQGAAVNL), 83-112 (RGRTALSLACERGHLDAVQLLVQFSGDPEA), 116-145 (AGNSPVMWAAACGHGAVLEFLVRSFRRLGL), and 153-182 (AGLTALQLAASRGHGTCVQALTGPWGRAAA). Disordered stretches follow at residues 181–213 (AAAAAARGSNSDSPPGHPAPAPSPERRRPSPRR) and 226–245 (AGGHGHGHGHGHGHGGELAS). Phosphoserine is present on S193. The residue at position 304 (S304) is a Phosphoserine. The disordered stretch occupies residues 320–377 (VGLSPHPEGCPGSGRLGLRRRSTAPDIPSLVGEASGPESGPELENNALPFSVPGPKPW).

The chain is Ankyrin repeat domain-containing protein 63 from Mus musculus (Mouse).